The following is a 152-amino-acid chain: Mitochondrial fission 1 protein (152 aa).

Met1 carries the N-acetylmethionine modification. At 1–122 the chain is on the cytoplasmic side; it reads MEAVLNELVS…LIDKAMKKDG (122 aa). A Phosphoserine modification is found at Ser10. The stretch at 71–104 is one TPR repeat; it reads RDYVFYLAVGNYRLKEYEKALKYVRGLLQTEPQN. Residues 123–143 form a helical membrane-spanning segment; sequence LVGMAIVGGMALGVAGLAGLI. Topologically, residues 144-152 are mitochondrial intermembrane; sequence GLAVSKSKS.

This sequence belongs to the FIS1 family. As to quaternary structure, interacts with DNM1L/DLP1 through the TPR region; may form part of a larger protein complex at the endoplasmic reticulum-mitochondrial interface during mitochondrial fission. Interacts with MARCHF5. Interacts with MIEF1. Interacts with PEX11A, PEX11B and PEX11G. Ubiquitinated by MARCHF5.

It is found in the mitochondrion outer membrane. Its subcellular location is the peroxisome membrane. Involved in the fragmentation of the mitochondrial network and its perinuclear clustering. Plays a minor role in the recruitment and association of the fission mediator dynamin-related protein 1 (DNM1L) to the mitochondrial surface and mitochondrial fission. May not be essential for the assembly of functional fission complexes and the subsequent membrane scission event. Also mediates peroxisomal fission. May act when the products of fission are directed toward mitochondrial homeostasis, mitophagy, or apoptosis. Can induce cytochrome c release from the mitochondrion to the cytosol, ultimately leading to apoptosis. The chain is Mitochondrial fission 1 protein from Rattus norvegicus (Rat).